The primary structure comprises 502 residues: Putative diacyglycerol O-acyltransferase MT1809 (502 aa).

Residue His-174 is the Proton acceptor of the active site.

It belongs to the long-chain O-acyltransferase family.

It carries out the reaction an acyl-CoA + a 1,2-diacyl-sn-glycerol = a triacyl-sn-glycerol + CoA. Its pathway is glycerolipid metabolism; triacylglycerol biosynthesis. This chain is Putative diacyglycerol O-acyltransferase MT1809, found in Mycobacterium tuberculosis (strain CDC 1551 / Oshkosh).